The primary structure comprises 293 residues: Deubiquitinase OTUD6B (293 aa).

2 disordered regions span residues 1-43 and 57-114; these read MEEV…RRKQ and QKHE…LEKE. Residues 147–284 form the OTU domain; it reads LQIKEISSDG…GEHYNSVEPL (138 aa). Residues 152 to 158 are cys-loop; it reads ISSDGHC. The active site involves Asp-155. The active-site Nucleophile is Cys-158. The variable-loop stretch occupies residues 219 to 229; the sequence is VADTAAWGGQL. Residues 267-277 form a his-loop region; sequence YMRHAYGLGEH. His-277 is a catalytic residue.

It carries out the reaction Thiol-dependent hydrolysis of ester, thioester, amide, peptide and isopeptide bonds formed by the C-terminal Gly of ubiquitin (a 76-residue protein attached to proteins as an intracellular targeting signal).. In terms of biological role, deubiquitinating enzyme that may play a role in the ubiquitin-dependent regulation of different cellular processes. This is Deubiquitinase OTUD6B (otud6b) from Danio rerio (Zebrafish).